A 1775-amino-acid polypeptide reads, in one-letter code: MALSLWPLLLLLLLLLLLSFAVTLAPTGPHSLDPGLSFLKSLLSTLDQAPQGSLSRSRFFTFLANISSSFEPGRMGEGPVGEPPPLQPPALRLHDFLVTLRGSPDWEPMLGLLGDMLALLGQEQTPRDFLVHQAGVLGGLVEVLLGALVPGGPPTPTRPPCTRDGPSDCVLAADWLPSLLLLLEGTRWQALVQVQPSVDPTNATGLDGREAAPHFLQGLLGLLTPTGELGSKEALWGGLLRTVGAPLYAAFQEGLLRVTHSLQDEVFSILGQPEPDTNGQCQGGNLQQLLLWGVRHNLSWDVQALGFLSGSPPPPPALLHCLSTGVPLPRASQPSAHISPRQRRAITVEALCENHLGPAPPYSISNFSIHLLCQHTKPATPQPHPSTTAICQTAVWYAVSWAPGAQGWLQACHDQFPDEFLDAICSNLSFSALSGSNRRLVKRLCAGLLPPPTSCPEGLPPVPLTPDIFWGCFLENETLWAERLCGEASLQAVPPSNQAWVQHVCQGPTPDVTASPPCHIGPCGERCPDGGSFLVMVCANDTMYEVLVPFWPWLAGQCRISRGGNDTCFLEGLLGPLLPSLPPLGPSPLCLTPGPFLLGMLSQLPRCQSSVPALAHPTRLHYLLRLLTFLLGPGAGGAEAQGMLGRALLLSSLPDNCSFWDAFRPEGRRSVLRTIGEYLEQDEEQPTPSGFEPTVNPSSGISKMELLACFSPVLWDLLQREKSVWALQILVQAYLHMPPENLQQLVLSAEREAAQGFLTLMLQGKLQGKLQVPPSEEQALGRLTALLLQRYPRLTSQLFIDLSPLIPFLAVSDLMRFPPSLLANDSVLAAIRDYSPGMRPEQKEALAKRLLAPELFGEVPAWPQELLWAVLPLLPHLPLENFLQLSPHQIQALEDSWPAAGLGPGHARHVLRSLVNQSVQDGEEQVRRLGPLACFLSPEELQSLVPLSDPTGPVERGLLECAANGTLSPEGRVAYELLGVLRSSGGAVLSPRELRVWAPLFSQLGLRFLQELSEPQLRAMLPVLQGTSVTPAQAVLLLGRLLPRHDLSLEELCSLHLLLPGLSPQTLQAIPRRVLVGACSCLAPELSRLSACQTAALLQTFRVKDGVKNMGTTGAGPAVCIPGQPIPTTWPDCLLPLLPLKLLQLDSLALLANRRRYWELPWSEQQAQFLWKKMQVPTNLTLRNLQALGTLAGGMSCEFLQQINSMVDFLEVVHMIYQLPTRVRGSLRACIWAELQRRMAMPEPEWTTVGPELNGLDSKLLLDLPIQLMDRLSNESIMLVVELVQRAPEQLLALTPLHQAALAERALQNLAPKETPVSGEVLETLGPLVGFLGTESTRQIPLQILLSHLSQLQGFCLGETFATELGWLLLQESVLGKPELWSQDEVEQAGRLVFTLSTEAISLIPREALGPETLERLLEKQQSWEQSRVGQLCREPQLAAKKAALVAGVVRPAAEDLPEPVPNCADVRGTFPAAWSATQIAEMELSDFEDCLTLFAGDPGLGPEELRAAMGKAKQLWGPPRGFRPEQILQLGRLLIGLGDRELQELILVDWGVLSTLGQIDGWSTTQLRIVVSSFLRQSGRHVSHLDFVHLTALGYTLCGLRPEELQHISSWEFSQAALFLGTLHLQCSEEQLEVLAHLLVLPGGFGPISNWGPEIFTEIGTIAAGIPDLALSALLRGQIQGVTPLAISVIPPPKFAVVFSPIQLSSLTSAQAVAVTPEQMAFLSPEQRRAVAWAQHEGKESPEQQGRSTAWGLQDWSRPSWSLVLTISFLGHLL.

An N-terminal signal peptide occupies residues 1–22 (MALSLWPLLLLLLLLLLLSFAV). Asn-65, Asn-202, Asn-297, Asn-366, Asn-427, Asn-476, Asn-540, Asn-565, Asn-656, Asn-824, Asn-916, Asn-964, Asn-1179, and Asn-1274 each carry an N-linked (GlcNAc...) asparagine glycan.

This sequence belongs to the stereocilin family.

It is found in the cell surface. Its subcellular location is the cell projection. The protein resides in the kinocilium. It localises to the stereocilium. In terms of biological role, essential to the formation of horizontal top connectors between outer hair cell stereocilia. The sequence is that of Stereocilin (STRC) from Homo sapiens (Human).